The following is a 160-amino-acid chain: SsrA-binding protein (160 aa).

It belongs to the SmpB family.

The protein resides in the cytoplasm. Functionally, required for rescue of stalled ribosomes mediated by trans-translation. Binds to transfer-messenger RNA (tmRNA), required for stable association of tmRNA with ribosomes. tmRNA and SmpB together mimic tRNA shape, replacing the anticodon stem-loop with SmpB. tmRNA is encoded by the ssrA gene; the 2 termini fold to resemble tRNA(Ala) and it encodes a 'tag peptide', a short internal open reading frame. During trans-translation Ala-aminoacylated tmRNA acts like a tRNA, entering the A-site of stalled ribosomes, displacing the stalled mRNA. The ribosome then switches to translate the ORF on the tmRNA; the nascent peptide is terminated with the 'tag peptide' encoded by the tmRNA and targeted for degradation. The ribosome is freed to recommence translation, which seems to be the essential function of trans-translation. The sequence is that of SsrA-binding protein from Escherichia coli O139:H28 (strain E24377A / ETEC).